A 220-amino-acid polypeptide reads, in one-letter code: Flagellin A2 (220 aa).

Residues 1-11 (MFNNITDDDRG) constitute a propeptide that is removed on maturation. N-linked (GlcNAc...) asparagine glycans are attached at residues N78, N95, N112, and N124.

It belongs to the archaeal flagellin family. Glycosylated by a pentasaccharide similar to the S-layer glycoprotein, probably comprising a hexose, 2 hexuronic acids, a methyl ester of a hexuronic acid and mannose.

Its subcellular location is the archaeal flagellum. In terms of biological role, flagellin that plays both structural and regulatory roles in flagella biosynthesis. Does not constitute a major flagellin in terms of abundance contrary to FlgA1: may regulate the flagella-dependent swimming motility depending on the relative abundance of FlgA1. Not involved in PibD-dependent surface adhesion. This Haloferax volcanii (strain ATCC 29605 / DSM 3757 / JCM 8879 / NBRC 14742 / NCIMB 2012 / VKM B-1768 / DS2) (Halobacterium volcanii) protein is Flagellin A2 (flgA2).